The following is a 453-amino-acid chain: Aldehyde dehydrogenase, dimeric NADP-preferring (453 aa).

Residue S2 is modified to N-acetylserine. An N6-acetyllysine modification is found at K178. An NAD(+)-binding site is contributed by G188–G193. Residue K194 is modified to N6-acetyllysine. Active-site residues include E210 and C244.

This sequence belongs to the aldehyde dehydrogenase family. Homodimer. As to expression, high levels in stomach, esophagus and lung; low level in the liver and kidney.

The protein localises to the cytoplasm. The catalysed reaction is an aldehyde + NAD(+) + H2O = a carboxylate + NADH + 2 H(+). It catalyses the reaction octanal + NAD(+) + H2O = octanoate + NADH + 2 H(+). In terms of biological role, ALDHs play a major role in the detoxification of alcohol-derived acetaldehyde. They are involved in the metabolism of corticosteroids, biogenic amines, neurotransmitters, and lipid peroxidation. Oxidizes medium and long chain aldehydes into non-toxic fatty acids. Preferentially oxidizes aromatic aldehyde substrates. Comprises about 50 percent of corneal epithelial soluble proteins. May play a role in preventing corneal damage caused by ultraviolet light. The protein is Aldehyde dehydrogenase, dimeric NADP-preferring (ALDH3A1) of Homo sapiens (Human).